Reading from the N-terminus, the 490-residue chain is Dipeptide and tripeptide permease A (490 aa).

Residues 1 to 34 (MSNANNNQPENVSLNAFKQPRAFYLIFSIELWER) lie on the Cytoplasmic side of the membrane. A helical transmembrane segment spans residues 35-55 (FGYYGLQGIMAVYLVKMLGMT). The Periplasmic portion of the chain corresponds to 56–59 (EADS). A helical transmembrane segment spans residues 60–80 (ITLFSSFSALVYGFVAIGGWL). At 81–89 (GDKVLGAKR) the chain is on the cytoplasmic side. The helical transmembrane segment at 90-110 (VIMLGALVLAIGYAFVAYSGH) threads the bilayer. A topological domain (periplasmic) is located at residue Asp111. The chain crosses the membrane as a helical span at residues 112 to 132 (LSLVYVGMATIAVGNGLFKAN). Topologically, residues 133-153 (PSSLLSTCYEKNDPRLDGAFT) are cytoplasmic. Residues 154-174 (MYYMSVNIGSFFSMLATPWLA) traverse the membrane as a helical segment. Over 175-176 (AR) the chain is Periplasmic. A helical membrane pass occupies residues 177-197 (FGWSVAFSLSVVGMLITLVNF). Residues 198–217 (MMCRRWVKDQGSKPDFAPLQ) are Cytoplasmic-facing. A helical membrane pass occupies residues 218 to 238 (VGKLMMTLVGVVILVAISTWL). Residues 239–246 (LHNQTIAR) are Periplasmic-facing. Residues 247-267 (WALAIISAGIILIFAKETFAL) traverse the membrane as a helical segment. Residues 268–274 (QGGARRK) are Cytoplasmic-facing. Residues 275–295 (MIVAFLLMLEAVVFFVLYSQM) traverse the membrane as a helical segment. The Periplasmic portion of the chain corresponds to 296–320 (PTSLNFFAIHNVEHSIFGIAFEPEQ). A helical transmembrane segment spans residues 321–341 (YQALNPFWIMVASPILAAIYN). Topologically, residues 342–352 (KMGDRLPMPHK) are cytoplasmic. Residues 353–373 (FAIGMVLCSGAFLVLPWGASF) traverse the membrane as a helical segment. Over 374–383 (ANEAGIVSVN) the chain is Periplasmic. Residues 384–404 (WLILSYALQSIGELMISGLGL) traverse the membrane as a helical segment. The Cytoplasmic segment spans residues 405–414 (AMVAQLVPQR). Residues 415–435 (LMGFIMGSWFLTTAAAALIAG) traverse the membrane as a helical segment. Topologically, residues 436 to 460 (KVAALTAVPGGEVADPHASLAIYSH) are periplasmic. A helical membrane pass occupies residues 461-481 (VFMQIGLATAVIAVLMLLTAP). Residues 482–490 (KLNRMTLGD) lie on the Cytoplasmic side of the membrane.

Belongs to the major facilitator superfamily. Proton-dependent oligopeptide transporter (POT/PTR) (TC 2.A.17) family. DtpA subfamily.

It localises to the cell inner membrane. Functionally, proton-dependent permease that transports di- and tripeptides. The chain is Dipeptide and tripeptide permease A from Edwardsiella piscicida.